Here is a 79-residue protein sequence, read N- to C-terminus: UPF0291 protein lp_2062 (79 aa).

Belongs to the UPF0291 family.

It localises to the cytoplasm. This chain is UPF0291 protein lp_2062, found in Lactiplantibacillus plantarum (strain ATCC BAA-793 / NCIMB 8826 / WCFS1) (Lactobacillus plantarum).